Here is a 152-residue protein sequence, read N- to C-terminus: D-aminoacyl-tRNA deacylase (152 aa).

The Gly-cisPro motif, important for rejection of L-amino acids motif lies at 142–143 (GP).

It belongs to the DTD family. Homodimer.

The protein localises to the cytoplasm. It catalyses the reaction glycyl-tRNA(Ala) + H2O = tRNA(Ala) + glycine + H(+). It carries out the reaction a D-aminoacyl-tRNA + H2O = a tRNA + a D-alpha-amino acid + H(+). In terms of biological role, an aminoacyl-tRNA editing enzyme that deacylates mischarged D-aminoacyl-tRNAs. Also deacylates mischarged glycyl-tRNA(Ala), protecting cells against glycine mischarging by AlaRS. Acts via tRNA-based rather than protein-based catalysis; rejects L-amino acids rather than detecting D-amino acids in the active site. By recycling D-aminoacyl-tRNA to D-amino acids and free tRNA molecules, this enzyme counteracts the toxicity associated with the formation of D-aminoacyl-tRNA entities in vivo and helps enforce protein L-homochirality. The chain is D-aminoacyl-tRNA deacylase from Burkholderia ambifaria (strain ATCC BAA-244 / DSM 16087 / CCUG 44356 / LMG 19182 / AMMD) (Burkholderia cepacia (strain AMMD)).